The chain runs to 294 residues: MLRVLHTIEDVREQTREWRAAGSSIGCVMTMGALHEGHLSLVDAARRECDKVVLTLFVNPIQFGPSEDFDRYPRTEEADFRALRDRECDAVFAPATETIFPLGERRIDQVRTKVVVRGLTDVLCGPRRPGHFDGVTTEVLKMLHIVDCDRTYWGEKDYQQYAVIRAMVEDQGLPVKVVPCPTMRDVDGLALSSRNTYLDSGQRAIAPRLYAALRRGARRIAEQGIDVIGETTKQIAETLLAHGFDLVEYVEVYTGSLGPAVAGTPVEELRVFGAVRLGGARLLDNAAVADEVGG.

Residue 31-38 (MGALHEGH) participates in ATP binding. His38 acts as the Proton donor in catalysis. Residue Gln62 participates in (R)-pantoate binding. Gln62 serves as a coordination point for beta-alanine. ATP is bound at residue 154-157 (GEKD). (R)-pantoate is bound at residue Gln160. 191-194 (LSSR) contacts ATP.

The protein belongs to the pantothenate synthetase family. Homodimer.

It localises to the cytoplasm. The enzyme catalyses (R)-pantoate + beta-alanine + ATP = (R)-pantothenate + AMP + diphosphate + H(+). Its pathway is cofactor biosynthesis; (R)-pantothenate biosynthesis; (R)-pantothenate from (R)-pantoate and beta-alanine: step 1/1. Functionally, catalyzes the condensation of pantoate with beta-alanine in an ATP-dependent reaction via a pantoyl-adenylate intermediate. This is Pantothenate synthetase 3 from Frankia alni (strain DSM 45986 / CECT 9034 / ACN14a).